A 194-amino-acid chain; its full sequence is Cysteine and glycine-rich protein 3 (194 aa).

Residues 1–5 (MPNWG) form an interaction with TCAP region. Positions 10-61 (CGACDKTVYHAEEIQCNGRSFHKTCFHCMACRKALDSTTVAAHESEIYCKVC) constitute an LIM zinc-binding 1 domain. A Nuclear localization signal motif is present at residues 64–69 (RKYGPK). The segment at 94–105 (QSPKPARAATTS) is interaction with CLF2. Phosphoserine occurs at positions 95, 111, and 153. Residues 120–171 (CPRCGKSVYAAEKVMGGGKPWHKTCFPCAICGKSLESTNVTDKDGELYCKVC) form the LIM zinc-binding 2 domain.

In terms of assembly, self-associates. Oligomeric in the cytoplasm and monomeric in the nucleus. Homooligomers preferentially form along the actin cytoskeleton. Interacts with TCAP, ACTN2 and NRAP. Interacts with LDHD, SPTB, MYOD1, MYOG, MYF6. Interacts with GLRX3 (via C-terminus); GLRX3 and calcineurin compete for interaction with CSRP3. Interacts with CFL2; the stoichiometry influences F-actin depolymerization and possibly two molecules of CFL2 can interact with one molecule of CSRP3 resulting in the highest functional impact; the interaction is stronger with phosphorylated CFL2. Post-translationally, phosphorylated by PKC/PRKCA. As to expression, high in striated muscle and adult heart.

It localises to the nucleus. The protein localises to the cytoplasm. Its subcellular location is the cytoskeleton. It is found in the myofibril. The protein resides in the sarcomere. It localises to the z line. Positive regulator of myogenesis. Acts as a cofactor for myogenic bHLH transcription factors such as MYOD1, and probably MYOG and MYF6. Enhances the DNA-binding activity of the MYOD1:TCF3 isoform E47 complex and may promote formation of a functional MYOD1:TCF3 isoform E47:MEF2A complex involved in myogenesis. Plays a crucial and specific role in the organization of cytosolic structures in cardiomyocytes. Could play a role in mechanical stretch sensing. May be a scaffold protein that promotes the assembly of interacting proteins at Z-line structures. It is essential for calcineurin anchorage to the Z line. Required for stress-induced calcineurin-NFAT activation. The role in regulation of cytoskeleton dynamics by association with CFL2 is reported conflictingly. Proposed to contribute to the maintenance of muscle cell integrity through an actin-based mechanism. Can directly bind to actin filaments, cross-link actin filaments into bundles without polarity selectivity and protect them from dilution- and cofilin-mediated depolymerization; the function seems to involve its self-association. In vitro can inhibit PKC/PRKCA activity. Proposed to be involved in cardiac stress signaling by down-regulating excessive PKC/PRKCA signaling. In Rattus norvegicus (Rat), this protein is Cysteine and glycine-rich protein 3 (Csrp3).